Reading from the N-terminus, the 438-residue chain is Cysteine--tRNA ligase (438 aa).

Cysteine 28 is a binding site for Zn(2+). The short motif at proline 30–asparagine 40 is the 'HIGH' region element. Residues cysteine 207, histidine 232, and glutamate 236 each coordinate Zn(2+). Positions lysine 264–serine 268 match the 'KMSKS' region motif. ATP is bound at residue lysine 267.

Belongs to the class-I aminoacyl-tRNA synthetase family. In terms of assembly, monomer. Zn(2+) serves as cofactor.

Its subcellular location is the cytoplasm. The enzyme catalyses tRNA(Cys) + L-cysteine + ATP = L-cysteinyl-tRNA(Cys) + AMP + diphosphate. This is Cysteine--tRNA ligase from Aster yellows witches'-broom phytoplasma (strain AYWB).